The following is a 145-amino-acid chain: 3-hydroxyacyl-[acyl-carrier-protein] dehydratase FabZ (145 aa).

H49 is an active-site residue.

It belongs to the thioester dehydratase family. FabZ subfamily.

Its subcellular location is the cytoplasm. It carries out the reaction a (3R)-hydroxyacyl-[ACP] = a (2E)-enoyl-[ACP] + H2O. Its function is as follows. Involved in unsaturated fatty acids biosynthesis. Catalyzes the dehydration of short chain beta-hydroxyacyl-ACPs and long chain saturated and unsaturated beta-hydroxyacyl-ACPs. This is 3-hydroxyacyl-[acyl-carrier-protein] dehydratase FabZ from Anaplasma phagocytophilum (strain HZ).